The primary structure comprises 195 residues: CASP-like protein 1B1 (195 aa).

At 1–25 the chain is on the cytoplasmic side; sequence MDLEKGKKPSEQAAACRIMQVKDKL. The helical transmembrane segment at 26–46 threads the bilayer; the sequence is ITLQPVVRACVFLATAVAAVI. Over 47 to 78 the chain is Extracellular; that stretch reads MGLNKQSYTTVVAIVGTRPVTQTFTAKFKDTP. Residues 79–99 form a helical membrane-spanning segment; sequence AFVFFVIANAIASGYNLMVLV. Residues 100–114 lie on the Cytoplasmic side of the membrane; that stretch reads TRRILQRRAQSLSVH. Residues 115 to 135 form a helical membrane-spanning segment; it reads LLDMVILTLLATGSATAASMA. The Extracellular segment spans residues 136–160; that stretch reads QLGKNGNLHARWNPICDKFGSFCNH. A helical transmembrane segment spans residues 161 to 181; the sequence is GGIALMSSFIGVALMLALNLL. Over 182 to 195 the chain is Cytoplasmic; that stretch reads SAAANSPRSNVTGQ.

Belongs to the Casparian strip membrane proteins (CASP) family. In terms of assembly, homodimer and heterodimers.

It is found in the cell membrane. The protein is CASP-like protein 1B1 of Oryza sativa subsp. indica (Rice).